A 270-amino-acid polypeptide reads, in one-letter code: 1-deoxy-11-beta-hydroxypentalenate dehydrogenase (270 aa).

12-36 (GAASGIGFALSARLAQAGARVVMTD) serves as a coordination point for NAD(+). Ser144 lines the substrate pocket. Tyr157 serves as the catalytic Proton acceptor. Lys161 is a binding site for NAD(+).

Belongs to the short-chain dehydrogenases/reductases (SDR) family.

The enzyme catalyses 1-deoxy-11beta-hydroxypentalenate + NAD(+) = 1-deoxy-11-oxopentalenate + NADH + H(+). The protein operates within antibiotic biosynthesis; neopentalenolactone biosynthesis. Functionally, catalyzes the oxidation of 1-deoxy-11-beta-hydroxypentalenic acid to 1-deoxy-11-oxopentalenic acid in the biosynthesis of neopentalenolactone antibiotic. In Streptomyces avermitilis (strain ATCC 31267 / DSM 46492 / JCM 5070 / NBRC 14893 / NCIMB 12804 / NRRL 8165 / MA-4680), this protein is 1-deoxy-11-beta-hydroxypentalenate dehydrogenase (ptlF).